A 143-amino-acid polypeptide reads, in one-letter code: Meiotically up-regulated gene 128 protein (143 aa).

Has a role in meiosis. This chain is Meiotically up-regulated gene 128 protein (mug128), found in Schizosaccharomyces pombe (strain 972 / ATCC 24843) (Fission yeast).